The following is a 76-amino-acid chain: KANTR integral membrane protein (76 aa).

A signal peptide spans 1–25 (MSPFSLLILVICAFSLFFLINLTRG). Topologically, residues 26–34 (LSILLVFSK) are extracellular. Residues 35-55 (NQLLALLLLSIVSLFSISLIS) form a helical membrane-spanning segment. The Cytoplasmic segment spans residues 56 to 76 (ALIFFDLLPSTFFGFILLFFF).

Its subcellular location is the membrane. In Homo sapiens (Human), this protein is KANTR integral membrane protein.